The primary structure comprises 882 residues: Leucine--tRNA ligase (882 aa).

Residues 43-53 (PYPSGNLHMGH) carry the 'HIGH' region motif. Residues 632–636 (TMSKS) carry the 'KMSKS' region motif. ATP is bound at residue Lys-635.

Belongs to the class-I aminoacyl-tRNA synthetase family.

It is found in the cytoplasm. The enzyme catalyses tRNA(Leu) + L-leucine + ATP = L-leucyl-tRNA(Leu) + AMP + diphosphate. The polypeptide is Leucine--tRNA ligase (Synechococcus sp. (strain JA-2-3B'a(2-13)) (Cyanobacteria bacterium Yellowstone B-Prime)).